The chain runs to 122 residues: Large ribosomal subunit protein uL14 (122 aa).

Belongs to the universal ribosomal protein uL14 family. Part of the 50S ribosomal subunit. Forms a cluster with proteins L3 and L19. In the 70S ribosome, L14 and L19 interact and together make contacts with the 16S rRNA in bridges B5 and B8.

Functionally, binds to 23S rRNA. Forms part of two intersubunit bridges in the 70S ribosome. This Lactobacillus acidophilus (strain ATCC 700396 / NCK56 / N2 / NCFM) protein is Large ribosomal subunit protein uL14.